The following is a 337-amino-acid chain: Glyceraldehyde-3-phosphate dehydrogenase (337 aa).

Residues Arg-17–Ile-18, Asp-39, Lys-83, and Ser-125 contribute to the NAD(+) site. Residues Ser-156–Thr-158, Thr-187, Arg-202, Thr-215–Gly-216, and Arg-238 contribute to the D-glyceraldehyde 3-phosphate site. Residue Cys-157 is the Nucleophile of the active site. Asn-319 serves as a coordination point for NAD(+).

It belongs to the glyceraldehyde-3-phosphate dehydrogenase family. In terms of assembly, homotetramer.

The protein resides in the cytoplasm. It carries out the reaction D-glyceraldehyde 3-phosphate + phosphate + NAD(+) = (2R)-3-phospho-glyceroyl phosphate + NADH + H(+). Its pathway is carbohydrate degradation; glycolysis; pyruvate from D-glyceraldehyde 3-phosphate: step 1/5. Functionally, catalyzes the oxidative phosphorylation of glyceraldehyde 3-phosphate (G3P) to 1,3-bisphosphoglycerate (BPG) using the cofactor NAD. The first reaction step involves the formation of a hemiacetal intermediate between G3P and a cysteine residue, and this hemiacetal intermediate is then oxidized to a thioester, with concomitant reduction of NAD to NADH. The reduced NADH is then exchanged with the second NAD, and the thioester is attacked by a nucleophilic inorganic phosphate to produce BPG. The sequence is that of Glyceraldehyde-3-phosphate dehydrogenase (gapA) from Mycoplasma pneumoniae (strain ATCC 29342 / M129 / Subtype 1) (Mycoplasmoides pneumoniae).